The primary structure comprises 487 residues: V-type proton ATPase subunit B3 (487 aa).

This sequence belongs to the ATPase alpha/beta chains family. As to quaternary structure, V-ATPase is a heteromultimeric enzyme composed of a peripheral catalytic V1 complex (components A to H) attached to an integral membrane V0 proton pore complex (components: a, c, c'', d and e).

The protein localises to the vacuole membrane. Its function is as follows. Non-catalytic subunit of the peripheral V1 complex of vacuolar ATPase. V-ATPase is responsible for acidifying a variety of intracellular compartments in eukaryotic cells. The protein is V-type proton ATPase subunit B3 (VHA-B3) of Arabidopsis thaliana (Mouse-ear cress).